Here is a 328-residue protein sequence, read N- to C-terminus: m7GpppN-mRNA hydrolase NUDT17 (328 aa).

In terms of domain architecture, Nudix hydrolase spans 90-236; the sequence is GVDLGVAVIL…DGTETPGLLP (147 aa). The Nudix box signature appears at 127-148; that stretch reads GHVELEEELLDGGLRELWEESG. Mg(2+) is bound by residues Glu-142 and Glu-146. Residues 299–328 are disordered; that stretch reads PCKSAAYLDPGPAKEEWNMDPLPPNQGSGK.

The protein belongs to the Nudix hydrolase family. Mg(2+) is required as a cofactor. It depends on Mn(2+) as a cofactor.

It carries out the reaction a 5'-end (N(7)-methyl 5'-triphosphoguanosine)-ribonucleoside in mRNA + H2O = N(7)-methyl-GDP + a 5'-end phospho-ribonucleoside in mRNA + 2 H(+). Its function is as follows. Acts as a decapping enzyme capable of hydrolyzing monomethylated capped RNAs (in vitro). Hydrolyzes monomethylated capped RNA after alpha and beta phosphates to form N(7)-methyl-GDP. Shows low activity towards unmethylated capped RNA. This is m7GpppN-mRNA hydrolase NUDT17 (NUDT17) from Homo sapiens (Human).